A 98-amino-acid polypeptide reads, in one-letter code: SPbeta prophage-derived uncharacterized protein YorB (98 aa).

This Bacillus subtilis (strain 168) protein is SPbeta prophage-derived uncharacterized protein YorB (yorB).